The chain runs to 161 residues: GTP-dependent dephospho-CoA kinase (161 aa).

GTP contacts are provided by aspartate 37, isoleucine 38, aspartate 56, lysine 58, glutamate 112, and aspartate 135.

Belongs to the GTP-dependent DPCK family.

The catalysed reaction is 3'-dephospho-CoA + GTP = GDP + CoA + H(+). It participates in cofactor biosynthesis; coenzyme A biosynthesis. Catalyzes the GTP-dependent phosphorylation of the 3'-hydroxyl group of dephosphocoenzyme A to form coenzyme A (CoA). This is GTP-dependent dephospho-CoA kinase from Methanococcus aeolicus (strain ATCC BAA-1280 / DSM 17508 / OCM 812 / Nankai-3).